We begin with the raw amino-acid sequence, 396 residues long: Phosphoglycerate kinase (396 aa).

Residues 21-23 (DFN), arginine 36, 59-62 (HLGK), arginine 119, and arginine 156 contribute to the substrate site. Residues lysine 206, glycine 294, glutamate 325, and 352-355 (GGDS) contribute to the ATP site.

It belongs to the phosphoglycerate kinase family. Monomer.

The protein localises to the cytoplasm. The enzyme catalyses (2R)-3-phosphoglycerate + ATP = (2R)-3-phospho-glyceroyl phosphate + ADP. It participates in carbohydrate degradation; glycolysis; pyruvate from D-glyceraldehyde 3-phosphate: step 2/5. The sequence is that of Phosphoglycerate kinase from Listeria monocytogenes serovar 1/2a (strain ATCC BAA-679 / EGD-e).